Here is a 567-residue protein sequence, read N- to C-terminus: Hexose transporter HXT9 (567 aa).

A compositionally biased stretch (polar residues) spans methionine 1–glutamate 16. The tract at residues methionine 1 to glutamate 45 is disordered. Topologically, residues methionine 1–serine 56 are cytoplasmic. The segment covering serine 17–valine 28 has biased composition (low complexity). A helical membrane pass occupies residues alanine 57–tryptophan 77. At aspartate 78–glycine 112 the chain is on the extracellular side. A glycan (N-linked (GlcNAc...) asparagine) is linked at asparagine 87. The helical transmembrane segment at leucine 113–glycine 133 threads the bilayer. The Cytoplasmic portion of the chain corresponds to aspartate 134–arginine 139. Residues isoleucine 140–isoleucine 160 traverse the membrane as a helical segment. Residues asparagine 161–arginine 170 are Extracellular-facing. The chain crosses the membrane as a helical span at residues isoleucine 171 to valine 191. The Cytoplasmic portion of the chain corresponds to alanine 192–arginine 197. Residues glycine 198–threonine 218 traverse the membrane as a helical segment. The Extracellular portion of the chain corresponds to asparagine 219–arginine 232. The N-linked (GlcNAc...) asparagine glycan is linked to asparagine 227. A helical transmembrane segment spans residues valine 233–proline 253. Residues glutamate 254–aspartate 336 lie on the Cytoplasmic side of the membrane. Residues asparagine 337–lysine 353 traverse the membrane as a helical segment. Residues aspartate 354–serine 359 are Extracellular-facing. Residues isoleucine 360–isoleucine 377 traverse the membrane as a helical segment. At glutamate 378–threonine 384 the chain is on the cytoplasmic side. The helical transmembrane segment at cysteine 385–valine 405 threads the bilayer. Topologically, residues threonine 406–valine 429 are extracellular. The helical transmembrane segment at phenylalanine 430–valine 450 threads the bilayer. The Cytoplasmic portion of the chain corresponds to serine 451–threonine 467. Residues alanine 468–isoleucine 488 form a helical membrane-spanning segment. A topological domain (extracellular) is located at residue asparagine 489. Residues phenylalanine 490 to phenylalanine 510 traverse the membrane as a helical segment. The Cytoplasmic portion of the chain corresponds to valine 511–serine 567.

It belongs to the major facilitator superfamily. Sugar transporter (TC 2.A.1.1) family.

It localises to the membrane. Its function is as follows. Probable glucose transporter. This Saccharomyces cerevisiae (strain ATCC 204508 / S288c) (Baker's yeast) protein is Hexose transporter HXT9 (HXT9).